The primary structure comprises 381 residues: Cytochrome b (381 aa).

4 consecutive transmembrane segments (helical) span residues 34-54, 78-99, 114-134, and 179-199; these read FGSL…FLAM, WLIR…YFHI, WNIG…GYVL, and FFAF…IHVL. Positions 84 and 98 each coordinate heme b. Heme b-binding residues include His-183 and His-197. Position 202 (His-202) interacts with a ubiquinone. 4 helical membrane-spanning segments follow: residues 227-247, 289-309, 321-341, and 348-368; these read YKDA…ALFL, LGGV…PFLH, LTQI…WIGG, and FILI…IALP.

It belongs to the cytochrome b family. The cytochrome bc1 complex contains 3 respiratory subunits (MT-CYB, CYC1 and UQCRFS1), 2 core proteins (UQCRC1 and UQCRC2) and probably 6 low-molecular weight proteins. It depends on heme b as a cofactor.

The protein localises to the mitochondrion inner membrane. Functionally, component of the ubiquinol-cytochrome c reductase complex (complex III or cytochrome b-c1 complex) that is part of the mitochondrial respiratory chain. The b-c1 complex mediates electron transfer from ubiquinol to cytochrome c. Contributes to the generation of a proton gradient across the mitochondrial membrane that is then used for ATP synthesis. The polypeptide is Cytochrome b (mt-cyb) (Isurus oxyrinchus (Shortfin mako shark)).